Here is a 104-residue protein sequence, read N- to C-terminus: MAAKIRKGDKVIVLNGRDKGRTGEVFEVRPTENKALVRGVNLVKRHQKQTQAQEGGIISKEAAIHLSNIAIVGKDGKPTRVGFKIQADGKKVRIAKRSGAEIDG.

Belongs to the universal ribosomal protein uL24 family. In terms of assembly, part of the 50S ribosomal subunit.

One of two assembly initiator proteins, it binds directly to the 5'-end of the 23S rRNA, where it nucleates assembly of the 50S subunit. In terms of biological role, one of the proteins that surrounds the polypeptide exit tunnel on the outside of the subunit. This is Large ribosomal subunit protein uL24 from Rhodopseudomonas palustris (strain BisB18).